A 1366-amino-acid chain; its full sequence is DNA-directed RNA polymerase subunit beta (1366 aa).

It belongs to the RNA polymerase beta chain family. In terms of assembly, the RNAP catalytic core consists of 2 alpha, 1 beta, 1 beta' and 1 omega subunit. When a sigma factor is associated with the core the holoenzyme is formed, which can initiate transcription.

It catalyses the reaction RNA(n) + a ribonucleoside 5'-triphosphate = RNA(n+1) + diphosphate. Its function is as follows. DNA-dependent RNA polymerase catalyzes the transcription of DNA into RNA using the four ribonucleoside triphosphates as substrates. This chain is DNA-directed RNA polymerase subunit beta, found in Marinomonas sp. (strain MWYL1).